Reading from the N-terminus, the 502-residue chain is Arginine decarboxylase (502 aa).

At lysine 42 the chain carries N6-(pyridoxal phosphate)lysine. 226-236 serves as a coordination point for substrate; the sequence is IDIGGGLGIDY.

It belongs to the Orn/Lys/Arg decarboxylase class-II family. SpeA subfamily. The cofactor is pyridoxal 5'-phosphate. Requires Mg(2+) as cofactor.

It carries out the reaction L-arginine + H(+) = agmatine + CO2. Its pathway is amine and polyamine biosynthesis; agmatine biosynthesis; agmatine from L-arginine: step 1/1. The chain is Arginine decarboxylase from Solanum lycopersicum (Tomato).